The chain runs to 530 residues: Bifunctional purine biosynthesis protein PurH (530 aa).

In terms of domain architecture, MGS-like spans 1-148; the sequence is MENSRPIKRA…KNHKDVGIVV (148 aa).

It belongs to the PurH family.

It carries out the reaction (6R)-10-formyltetrahydrofolate + 5-amino-1-(5-phospho-beta-D-ribosyl)imidazole-4-carboxamide = 5-formamido-1-(5-phospho-D-ribosyl)imidazole-4-carboxamide + (6S)-5,6,7,8-tetrahydrofolate. The enzyme catalyses IMP + H2O = 5-formamido-1-(5-phospho-D-ribosyl)imidazole-4-carboxamide. Its pathway is purine metabolism; IMP biosynthesis via de novo pathway; 5-formamido-1-(5-phospho-D-ribosyl)imidazole-4-carboxamide from 5-amino-1-(5-phospho-D-ribosyl)imidazole-4-carboxamide (10-formyl THF route): step 1/1. The protein operates within purine metabolism; IMP biosynthesis via de novo pathway; IMP from 5-formamido-1-(5-phospho-D-ribosyl)imidazole-4-carboxamide: step 1/1. This is Bifunctional purine biosynthesis protein PurH from Psychromonas ingrahamii (strain DSM 17664 / CCUG 51855 / 37).